A 63-amino-acid polypeptide reads, in one-letter code: Large ribosomal subunit protein bL28 (63 aa).

The segment at 1 to 20 is disordered; the sequence is MSKRCAITGKGPMVGNNVSH.

The protein belongs to the bacterial ribosomal protein bL28 family.

In Campylobacter concisus (strain 13826), this protein is Large ribosomal subunit protein bL28.